Here is a 435-residue protein sequence, read N- to C-terminus: Eukaryotic translation initiation factor 3 subunit E (435 aa).

Residues 219 to 392 enclose the PCI domain; that stretch reads FFNHPKGRDL…GHVVMGTQPL (174 aa).

It belongs to the eIF-3 subunit E family. As to quaternary structure, component of the eukaryotic translation initiation factor 3 (eIF-3) complex. The eIF-3 complex interacts with pix. Interacts with mxt. Expression levels in females and males are relatively similar 10 days after oviposition, however by day 15 expression is higher in gravid females than in males (at protein level).

Its subcellular location is the cytoplasm. It is found in the microsome. The protein localises to the endoplasmic reticulum. Its function is as follows. Component of the eukaryotic translation initiation factor 3 (eIF-3) complex, which is involved in protein synthesis of a specialized repertoire of mRNAs and, together with other initiation factors, stimulates binding of mRNA and methionyl-tRNAi to the 40S ribosome. The eIF-3 complex specifically targets and initiates translation of a subset of mRNAs involved in cell proliferation. In addition to its role in the eIF-3 complex, also functions in protein ubiquitination and degradation. During mitosis required for regulating mitotic microtubule growth and kinetochore formation, and consequently is required for satisfying the spindle assembly checkpoint (SAC) during metaphase to prevent delays in mitotic progression. This is likely by promoting the ubiquitination and degradation of Klp67A, a kinesin-like protein that suppresses microtubule polymerization at plus ends. Acts in the COP9 signalosome (CSN) mediated regulation of cullin neddylation by promoting Cul1 and Cul3 neddylation and negatively regulating the CSN complex subunit CSN5. The chain is Eukaryotic translation initiation factor 3 subunit E from Drosophila melanogaster (Fruit fly).